The chain runs to 452 residues: MAKRTLFGTDGVRGTANREPMTADTALRIGMAAGHLLRNGDHRHTVVIGKDTRLSGYMLEPALAAGFISVGMDVVLLGPLPTPAVAMLTRSLRADLGVMITASHNPFQDNGIKLFGPDGYKLSDDQEATIEALLDNGLEGHRAGPTALGKARRLDDCNGRYVEFVKSTFPRGRRLEGLRIVVDCAHGAAYRVAPKVLWELGATIVPIGVTPDGTNINKDCGSLHSRVMCETVVREGADLGVALDGDADRVVLCDEKGALVDGDQLLALIGRNWKRAGTLQGGGVVATVMSNLGLERFLKDEGLALARTPVGDRYVVEHMRAEGYNLGGEQSGHIVMSDFGTTGDGLMAALQVLSALVAEDRPASEVLDVFTPLPQLLRNVRVAGHDPRAILADPQVARAVSAGEGRLNGGGRLLIRKSGTEPLIRVMAEGEDEALVAQVVGDICAVIETASQ.

The active-site Phosphoserine intermediate is S103. Positions 103, 244, 246, and 248 each coordinate Mg(2+). Position 103 is a phosphoserine (S103).

Belongs to the phosphohexose mutase family. Requires Mg(2+) as cofactor. Post-translationally, activated by phosphorylation.

The enzyme catalyses alpha-D-glucosamine 1-phosphate = D-glucosamine 6-phosphate. Functionally, catalyzes the conversion of glucosamine-6-phosphate to glucosamine-1-phosphate. The protein is Phosphoglucosamine mutase of Rhodospirillum rubrum (strain ATCC 11170 / ATH 1.1.1 / DSM 467 / LMG 4362 / NCIMB 8255 / S1).